The following is a 465-amino-acid chain: ATP synthase subunit beta (465 aa).

155 to 162 lines the ATP pocket; it reads GGAGVGKT.

Belongs to the ATPase alpha/beta chains family. In terms of assembly, F-type ATPases have 2 components, CF(1) - the catalytic core - and CF(0) - the membrane proton channel. CF(1) has five subunits: alpha(3), beta(3), gamma(1), delta(1), epsilon(1). CF(0) has three main subunits: a(1), b(2) and c(9-12). The alpha and beta chains form an alternating ring which encloses part of the gamma chain. CF(1) is attached to CF(0) by a central stalk formed by the gamma and epsilon chains, while a peripheral stalk is formed by the delta and b chains.

It localises to the cell membrane. It catalyses the reaction ATP + H2O + 4 H(+)(in) = ADP + phosphate + 5 H(+)(out). Functionally, produces ATP from ADP in the presence of a proton gradient across the membrane. The catalytic sites are hosted primarily by the beta subunits. This chain is ATP synthase subunit beta, found in Buchnera aphidicola subsp. Acyrthosiphon pisum (strain 5A).